Here is a 713-residue protein sequence, read N- to C-terminus: tRNA 5-methylaminomethyl-2-thiouridine biosynthesis bifunctional protein MnmC (713 aa).

Residues 1-300 (MTAEPNKPCQ…MAAILSSATP (300 aa)) are tRNA (mnm(5)s(2)U34)-methyltransferase. Residues 306 to 713 (IGGGLASAHL…LRKLLKGKAL (408 aa)) form an FAD-dependent cmnm(5)s(2)U34 oxidoreductase region.

The protein in the N-terminal section; belongs to the methyltransferase superfamily. tRNA (mnm(5)s(2)U34)-methyltransferase family. It in the C-terminal section; belongs to the DAO family. FAD is required as a cofactor.

The protein resides in the cytoplasm. It catalyses the reaction 5-aminomethyl-2-thiouridine(34) in tRNA + S-adenosyl-L-methionine = 5-methylaminomethyl-2-thiouridine(34) in tRNA + S-adenosyl-L-homocysteine + H(+). Catalyzes the last two steps in the biosynthesis of 5-methylaminomethyl-2-thiouridine (mnm(5)s(2)U) at the wobble position (U34) in tRNA. Catalyzes the FAD-dependent demodification of cmnm(5)s(2)U34 to nm(5)s(2)U34, followed by the transfer of a methyl group from S-adenosyl-L-methionine to nm(5)s(2)U34, to form mnm(5)s(2)U34. This is tRNA 5-methylaminomethyl-2-thiouridine biosynthesis bifunctional protein MnmC from Shewanella baltica (strain OS155 / ATCC BAA-1091).